Consider the following 517-residue polypeptide: Superoxide-generating NADPH oxidase heavy chain subunit A (517 aa).

Residues 1–19 (MRLPTKEEIQRYWVNEGNK) lie on the Cytoplasmic side of the membrane. Residues 20–40 (LILVILYTLGNIAAFVYTFVH) traverse the membrane as a helical segment. Over 41-62 (YYNSPAFEVVGYGVCFARGCAQ) the chain is Extracellular. A Ferric oxidoreductase domain is found at 58-201 (RGCAQLLKLN…LFVVFFGLLV (144 aa)). The helical transmembrane segment at 63-83 (LLKLNCALILVPVLRNLLSFL) threads the bilayer. The Cytoplasmic portion of the chain corresponds to 84-97 (RGTFLNNYVPFDKN). A helical transmembrane segment spans residues 98–118 (IVFHKLIAWVICFATFGHVMA). Heme is bound by residues histidine 101 and histidine 115. Residues 119-149 (HFNNFRLYQDITPQEYKRILGIDYPNLTPIK) are Extracellular-facing. The helical transmembrane segment at 150–170 (YAFATLAGWTGHVVCIVMVLM) threads the bilayer. Residues 171–184 (YTSAVESIRRPMFE) lie on the Cytoplasmic side of the membrane. Residues 185–205 (GFWYTHHLFVVFFGLLVVHGL) traverse the membrane as a helical segment. Heme-binding residues include histidine 190 and histidine 203. Position 206 (histidine 206) is a topological domain, extracellular. Residues 207-227 (SILEPTSFWKWVIGPCALYIV) traverse the membrane as a helical segment. At 228–517 (ERLIRLLRSK…CRFHYNKENF (290 aa)) the chain is on the cytoplasmic side. Residues 229–349 (RLIRLLRSKK…DGPFGAASEE (121 aa)) enclose the FAD-binding FR-type domain. 283–289 (HPFTITS) contacts FAD.

In terms of assembly, composed of a heavy chain and a light chain. The cofactor is FAD.

Its subcellular location is the membrane. Functionally, critical component of the membrane-bound oxidase that generates superoxide. It is the terminal component of a respiratory chain that transfers single electrons from cytoplasmic NADPH across the plasma membrane to molecular oxygen on the exterior. This chain is Superoxide-generating NADPH oxidase heavy chain subunit A (noxA), found in Dictyostelium discoideum (Social amoeba).